The primary structure comprises 486 residues: Aspartyl/glutamyl-tRNA(Asn/Gln) amidotransferase subunit B (486 aa).

Belongs to the GatB/GatE family. GatB subfamily. As to quaternary structure, heterotrimer of A, B and C subunits.

It carries out the reaction L-glutamyl-tRNA(Gln) + L-glutamine + ATP + H2O = L-glutaminyl-tRNA(Gln) + L-glutamate + ADP + phosphate + H(+). It catalyses the reaction L-aspartyl-tRNA(Asn) + L-glutamine + ATP + H2O = L-asparaginyl-tRNA(Asn) + L-glutamate + ADP + phosphate + 2 H(+). Functionally, allows the formation of correctly charged Asn-tRNA(Asn) or Gln-tRNA(Gln) through the transamidation of misacylated Asp-tRNA(Asn) or Glu-tRNA(Gln) in organisms which lack either or both of asparaginyl-tRNA or glutaminyl-tRNA synthetases. The reaction takes place in the presence of glutamine and ATP through an activated phospho-Asp-tRNA(Asn) or phospho-Glu-tRNA(Gln). This chain is Aspartyl/glutamyl-tRNA(Asn/Gln) amidotransferase subunit B, found in Orientia tsutsugamushi (strain Ikeda) (Rickettsia tsutsugamushi).